A 295-amino-acid polypeptide reads, in one-letter code: Glutamyl-Q tRNA(Asp) synthetase (295 aa).

L-glutamate-binding positions include 5–9 (RFAPS) and Glu-41. The 'HIGH' region signature appears at 8–18 (PSPTGLLHIGS). 4 residues coordinate Zn(2+): Cys-97, Cys-99, Tyr-117, and Cys-121. Positions 178 and 196 each coordinate L-glutamate. A 'KMSKS' region motif is present at residues 234–238 (KWSKQ). Lys-237 provides a ligand contact to ATP.

It belongs to the class-I aminoacyl-tRNA synthetase family. GluQ subfamily. The cofactor is Zn(2+).

Its function is as follows. Catalyzes the tRNA-independent activation of glutamate in presence of ATP and the subsequent transfer of glutamate onto a tRNA(Asp). Glutamate is transferred on the 2-amino-5-(4,5-dihydroxy-2-cyclopenten-1-yl) moiety of the queuosine in the wobble position of the QUC anticodon. The polypeptide is Glutamyl-Q tRNA(Asp) synthetase (Neisseria meningitidis serogroup C / serotype 2a (strain ATCC 700532 / DSM 15464 / FAM18)).